Consider the following 230-residue polypeptide: Interleukin-6 (230 aa).

Positions 1–24 (MASKHNADLSSAAMLAALLLCALG) are cleaved as a signal peptide. A disulfide bridge connects residues cysteine 96 and cysteine 106. Asparagine 100 carries an N-linked (GlcNAc...) asparagine glycan. A compositionally biased stretch (basic and acidic residues) spans 206–218 (REMPKQKRRKDDG). Residues 206 to 230 (REMPKQKRRKDDGIIPPIHPSYQMT) form a disordered region.

It belongs to the IL-6 superfamily. As to quaternary structure, component of a hexamer of two molecules each of IL6, IL6R and IL6ST; first binds to IL6R to associate with the signaling subunit IL6ST. As to expression, expressed in kidney and spleen. Low expression in liver and gills.

The protein localises to the secreted. In terms of biological role, cytokine with a wide variety of biological functions in immunity, tissue regeneration, and metabolism. Binds to IL6R, then the complex associates to the signaling subunit IL6ST/gp130 to trigger the intracellular IL6-signaling pathway. The interaction with the membrane-bound IL6R and IL6ST stimulates 'classic signaling', whereas the binding of IL6 and soluble IL6R to IL6ST stimulates 'trans-signaling'. Alternatively, 'cluster signaling' occurs when membrane-bound IL6:IL6R complexes on transmitter cells activate IL6ST receptors on neighboring receiver cells. The sequence is that of Interleukin-6 (il6) from Paralichthys olivaceus (Bastard halibut).